A 436-amino-acid polypeptide reads, in one-letter code: Drebrin-like protein (436 aa).

Residues 2 to 133 form the ADF-H domain; that stretch reads AVNLSRNGPA…EPECIMEKVA (132 aa). The residue at position 26 (Thr26) is a Phosphothreonine. Position 160 is a phosphoserine (Ser160). An N6-acetyllysine modification is found at Lys176. Positions 178-232 form a coiled coil; it reads NFWAKAEKEEENRRLEEKRRAEEEKQRLEEERRERELQEAARREQRYQEQHRSAG. 2 stretches are compositionally biased toward basic and acidic residues: residues 185–229 and 264–275; these read KEEE…EQHR and HPREIFKQKERA. The interval 185–371 is disordered; it reads KEEENRRLEE…GSGHIDNYMQ (187 aa). The segment covering 276–286 has biased composition (polar residues); it reads MSTTSVSSSQP. 4 positions are modified to phosphoserine: Ser277, Ser280, Ser283, and Ser291. N6-acetyllysine is present on Lys296. Thr299 carries the post-translational modification Phosphothreonine. Residue Ser311 is modified to Phosphoserine. Residues Tyr340 and Tyr350 each carry the phosphotyrosine modification. The SH3 domain maps to 377–436; that stretch reads GQGLCARALYDYQAADDTEISFDPENLITGIEVIDEGWWRGYGPDGHFGMFPANYVELIE.

This sequence belongs to the ABP1 family. Interacts with FGD1, MAP4K1 and PRAM1. Interacts with ANKRD54. Interacts with WASL and WIPF1. Interacts with SHANK2 and SHANK3. Interacts with both COBL and PACSIN1. Interacts with DNM1 and SYN1. In terms of tissue distribution, detected in brain (at protein level). Widely expressed in brain with highest levels in hippocampus and cerebral cortex. Located primarily in dendrites and, in moderate amounts, in cell bodies. Isoform 1 and isoform 3 are the predominant isoforms in brain.

The protein localises to the cytoplasm. It is found in the cytoskeleton. The protein resides in the cell projection. Its subcellular location is the lamellipodium. It localises to the ruffle. The protein localises to the cell cortex. It is found in the cytosol. The protein resides in the cell membrane. Its subcellular location is the synapse. It localises to the perikaryon. The protein localises to the neuron projection. It is found in the dendrite. The protein resides in the postsynaptic density. Its subcellular location is the golgi apparatus membrane. It localises to the cytoplasmic vesicle. The protein localises to the clathrin-coated vesicle membrane. It is found in the podosome. The protein resides in the early endosome. In terms of biological role, adapter protein that binds F-actin and DNM1, and thereby plays a role in receptor-mediated endocytosis. Required for the formation of organized podosome rosettes. May act as a common effector of antigen receptor-signaling pathways in leukocytes. Acts as a key component of the immunological synapse that regulates T-cell activation by bridging TCRs and the actin cytoskeleton to gene activation and endocytic processes. Plays a role in the reorganization of the actin cytoskeleton, formation of cell projections, such as neurites, in neuron morphogenesis and synapse formation via its interaction with WASL and COBL. Does not bind G-actin and promote actin polymerization by itself. The protein is Drebrin-like protein of Rattus norvegicus (Rat).